A 263-amino-acid polypeptide reads, in one-letter code: Putative aliphatic sulfonates transport permease protein SsuC (263 aa).

Over 1-13 (MATPVKKWLLRVA) the chain is Cytoplasmic. The chain crosses the membrane as a helical span at residues 14–34 (PWFLPVGIVAVWQLASSVGWL). At 35 to 43 (STRILPSPE) the chain is on the periplasmic side. The helical transmembrane segment at 44-64 (GVVTAFWTLSASGELWQHLAI) threads the bilayer. The ABC transmembrane type-1 domain occupies 58-242 (LWQHLAISSW…LLGKLADVSA (185 aa)). At 65–68 (SSWR) the chain is on the cytoplasmic side. Residues 69–89 (ALIGFSIGGSLGLILGLISGL) form a helical membrane-spanning segment. Over 90-102 (SRWGERLLDTSIQ) the chain is Periplasmic. Residues 103 to 122 (MLRNVPHLALIPLVILWFGI) form a helical membrane-spanning segment. Residues 123–125 (DES) lie on the Cytoplasmic side of the membrane. The chain crosses the membrane as a helical span at residues 126–148 (AKIFLVALGTLFPIYINTWHGIR). At 149–164 (NIDRGLVEMARSYGLS) the chain is on the periplasmic side. A helical membrane pass occupies residues 165–185 (GIPLFIHVILPGALPSIMVGV). Residues 186–187 (RF) lie on the Cytoplasmic side of the membrane. Residues 188–208 (ALGLMWLTLIVAETISANSGI) form a helical membrane-spanning segment. Residues 209–217 (GYLAMNARE) lie on the Periplasmic side of the membrane. A helical membrane pass occupies residues 218–238 (FLQTDVVVVAIILYALLGKLA). At 239–263 (DVSAQLLERLWLRWNPAYHLKEATV) the chain is on the cytoplasmic side.

This sequence belongs to the binding-protein-dependent transport system permease family. CysTW subfamily.

The protein resides in the cell inner membrane. Functionally, part of a binding-protein-dependent transport system for aliphatic sulfonates. Probably responsible for the translocation of the substrate across the membrane. This is Putative aliphatic sulfonates transport permease protein SsuC (ssuC) from Escherichia coli (strain K12).